Here is a 581-residue protein sequence, read N- to C-terminus: Kelch-like protein 38 (581 aa).

Residues 34 to 101 (TDVSICAGAR…VYTGEAHIAT (68 aa)) enclose the BTB domain. Residues 136–237 (CLGMIRLSEI…HPAFFHHFIA (102 aa)) form the BACK domain. Kelch repeat units follow at residues 285-332 (FLIL…TLHR), 334-383 (IYVL…AHKN), 384-431 (FIFS…VKDQ), 433-479 (LYLF…VLGE), 480-521 (RIVI…VMGN), and 523-573 (LYVT…TLQC).

The chain is Kelch-like protein 38 (KLHL38) from Homo sapiens (Human).